The primary structure comprises 1377 residues: Dicer-like protein 2 (1377 aa).

In terms of domain architecture, Helicase ATP-binding spans 23–203 (MFEASLQENI…LSMIESNMNA (181 aa)). Position 36–43 (36–43 (MDTGSGKT)) interacts with ATP. Positions 144-147 (DEAH) match the DEAH box motif. The Helicase C-terminal domain occupies 367 to 544 (KLEALISFLS…ALALETMAEV (178 aa)). A Dicer dsRNA-binding fold domain is found at 563 to 657 (AVARLHHFCS…LPLTRKPELR (95 aa)). 2 RNase III domains span residues 916–1056 (ATRL…MDGG) and 1090–1274 (NDSL…VDSR). The Mg(2+) site is built by Glu-1129, Asp-1260, and Glu-1263.

Belongs to the helicase family. Dicer subfamily. Mg(2+) serves as cofactor. Mn(2+) is required as a cofactor.

Functionally, dicer-like endonuclease involved in cleaving double-stranded RNA in the RNA interference (RNAi) pathway. Produces 21 to 25 bp dsRNAs (siRNAs) which target the selective destruction of homologous RNAs leading to sequence-specific suppression of gene expression, called post-transcriptional gene silencing (PTGS). Part of a broad host defense response against viral infection and transposons. The protein is Dicer-like protein 2 (dcl2) of Aspergillus terreus (strain NIH 2624 / FGSC A1156).